The chain runs to 278 residues: Putative glycosyltransferase EpsE (278 aa).

This sequence belongs to the glycosyltransferase 2 family.

In terms of biological role, may be involved in the production of the exopolysaccharide (EPS) component of the extracellular matrix during biofilm formation. EPS is responsible for the adhesion of chains of cells into bundles. Required for biofilm maintenance. The protein is Putative glycosyltransferase EpsE (epsE) of Bacillus subtilis (strain 168).